The following is a 127-amino-acid chain: Fluoride-specific ion channel FluC (127 aa).

The next 4 helical transmembrane spans lie at 4–24 (LLCAVFIGGGTGSVLRWWLGM), 35–55 (IGTLTANLVGAFVIGAGLAWF), 71–91 (TGFCGGLTTFSTFSAEVVFLL), and 101–121 (LNVMVNLLGSFAMTAVAFWLF). Positions 75 and 78 each coordinate Na(+).

The protein belongs to the fluoride channel Fluc/FEX (TC 1.A.43) family.

The protein localises to the cell inner membrane. It carries out the reaction fluoride(in) = fluoride(out). Its activity is regulated as follows. Na(+) is not transported, but it plays an essential structural role and its presence is essential for fluoride channel function. Functionally, fluoride-specific ion channel. Important for reducing fluoride concentration in the cell, thus reducing its toxicity. This is Fluoride-specific ion channel FluC from Klebsiella pneumoniae (strain 342).